A 648-amino-acid chain; its full sequence is Biosynthetic arginine decarboxylase (648 aa).

Residue lysine 109 is modified to N6-(pyridoxal phosphate)lysine. Residue 291–301 (IDVGGGLGIDF) coordinates substrate.

Belongs to the Orn/Lys/Arg decarboxylase class-II family. SpeA subfamily. Mg(2+) is required as a cofactor. Requires pyridoxal 5'-phosphate as cofactor.

It catalyses the reaction L-arginine + H(+) = agmatine + CO2. The protein operates within amine and polyamine biosynthesis; agmatine biosynthesis; agmatine from L-arginine: step 1/1. Functionally, catalyzes the biosynthesis of agmatine from arginine. The sequence is that of Biosynthetic arginine decarboxylase from Prochlorococcus marinus (strain MIT 9301).